The chain runs to 387 residues: 3-ketoacyl-CoA thiolase (387 aa).

Cys91 functions as the Acyl-thioester intermediate in the catalytic mechanism. Catalysis depends on proton acceptor residues His343 and Cys373.

It belongs to the thiolase-like superfamily. Thiolase family. In terms of assembly, heterotetramer of two alpha chains (FadB) and two beta chains (FadA).

The protein localises to the cytoplasm. It catalyses the reaction an acyl-CoA + acetyl-CoA = a 3-oxoacyl-CoA + CoA. Its pathway is lipid metabolism; fatty acid beta-oxidation. Catalyzes the final step of fatty acid oxidation in which acetyl-CoA is released and the CoA ester of a fatty acid two carbons shorter is formed. This Aeromonas salmonicida (strain A449) protein is 3-ketoacyl-CoA thiolase.